A 305-amino-acid polypeptide reads, in one-letter code: MPGQAGRRRLVGGGCRGSQGPLGGAATMLRSLLLHSLRLCAQTASCLVLFPRFLGTACMLWLLDFLCIRKHLLGRRRRGEPETEVELNSDGDEVPPDDPPICVSDDNRLCTLASLRAVWHGQKLDFFKQAHEGGPAPNSEVVLPDGFQNQHILDYARGNRPLVLNFGSCTUPPFMARMSAFQRLVTKYQRDVDFLIIYIEEAHPSDGWVTTDSPYSIPQHRSLEDRVSAARVLQQGAPECSLVLDTMANSSSSAYGAYFERLYVIQSGTIMYQGGRGPDGYQVSELRTWLERYDQQLHGPQPRRV.

Over 1-43 (MPGQAGRRRLVGGGCRGSQGPLGGAATMLRSLLLHSLRLCAQT) the chain is Cytoplasmic. The helical; Signal-anchor for type II membrane protein transmembrane segment at 44–63 (ASCLVLFPRFLGTACMLWLL) threads the bilayer. Residues 64–305 (DFLCIRKHLL…QLHGPQPRRV (242 aa)) are Extracellular-facing. A disordered region spans residues 79-98 (GEPETEVELNSDGDEVPPDD). Positions 82-96 (ETEVELNSDGDEVPP) are enriched in acidic residues. Selenocysteine 171 is a catalytic residue. Residue selenocysteine 171 is a non-standard amino acid, selenocysteine.

This sequence belongs to the iodothyronine deiodinase family. As to quaternary structure, monomer. Homodimer. May undergo minor heretodimerization with DIO1 and DIO2. As to expression, expressed in brain only.

Its subcellular location is the cell membrane. It localises to the endosome membrane. The catalysed reaction is 3,3',5'-triiodo-L-thyronine + iodide + A + H(+) = L-thyroxine + AH2. It carries out the reaction 3,3'-diiodo-L-thyronine + iodide + A + H(+) = 3,3',5-triiodo-L-thyronine + AH2. It catalyses the reaction 3-iodo-L-thyronine + iodide + A + H(+) = 3,5-diiodo-L-thyronine + AH2. The enzyme catalyses L-thyronine + iodide + A + H(+) = 3-iodo-L-thyronine + AH2. The catalysed reaction is 3',5'-diiodo-L-thyronine + iodide + A + H(+) = 3,3',5'-triiodo-L-thyronine + AH2. It carries out the reaction 3'-iodo-L-thyronine + iodide + A + H(+) = 3,3'-diiodo-L-thyronine + AH2. It catalyses the reaction 3,3',5'-triiodothyronamine + iodide + A + H(+) = 3,3',5,5'-tetraiodothyronamine + AH2. The enzyme catalyses 3',5'-diiodothyronamine + iodide + A + H(+) = 3,3',5'-triiodothyronamine + AH2. The catalysed reaction is 3,3'-diiodothyronamine + iodide + A + H(+) = 3,3',5-triiodothyronamine + AH2. It carries out the reaction 3-iodothyronamine + iodide + A + H(+) = 3,5-diiodothyronamine + AH2. It catalyses the reaction 3'-iodothyronamine + iodide + A + H(+) = 3,3'-diiodothyronamine + AH2. The enzyme catalyses thyronamine + iodide + A + H(+) = 3-iodothyronamine + AH2. Plays a crucial role in the metabolism of thyroid hormones (TH) and has specific roles in TH activation and inactivation by deiodination, particularly in different tissues. Catalyzes the deiodination of L-thyroxine (T4) to 3,3',5'-triiodothyronine (rT3), 3,5-diiodothyronine (3,5-T2) to 3-monoiodothyronine (3-T1), rT3 to 3',5'-diiodothyronine (3',5'-T2) and 3,3'-diiodothyronine (3,3'-T2) to 3'-monoiodothyronine (3'-T1) via inner-ring deiodination (IRD). Catalyzes the deiodination of 3,5,3'-triiodothyronine (T3) to 3,3'-diiodothyronine (3,3'-T2) via IRD. Catalyzes the deiodination of 3-T1 to L-thyronine (T0) via outer-ring deiodination (ORD). Catalyzes the tyrosyl ring deiodinations of 3,3',5,5'-tetraiodothyronamine, 3,3',5'-triiodothyronamine, 3,5,3'-triiodothyronamine, 3,5-diiodothyronamine, 3,3'-diiodothyronamine and 3-iodothyronamine. This is Thyroxine 5-deiodinase (DIO3) from Sus scrofa (Pig).